The chain runs to 948 residues: Protocadherin alpha-2 (948 aa).

Residues 1 to 22 form the signal peptide; sequence MASSIRRGRGAWTRLLSLLLLA. Residues 23–697 are Extracellular-facing; it reads AWEVGSGQLR…GSEATLVDVN (675 aa). 6 Cadherin domains span residues 30-133, 157-242, 243-350, 351-455, 456-565, and 588-678; these read QLRY…PPIF, ASDA…EPTF, AQSV…TPEV, SITS…APAF, AQPE…APAL, and GHVV…APKA. N-linked (GlcNAc...) asparagine glycosylation is found at N257, N265, N362, and N548. Residues 698-718 form a helical membrane-spanning segment; sequence VYLIIAICAVSSLLVLTVLLY. Over 719–948 the chain is Cytoplasmic; the sequence is TALRCSVPPT…GNSTTDNSDQ (230 aa). The stretch at 734–737 is one PXXP 1 repeat; that stretch reads PGKP. The tract at residues 734-892 is 5 X 4 AA repeats of P-X-X-P; it reads PGKPTLVCSS…PDKFIIPGSP (159 aa). Disordered stretches follow at residues 754–801, 829–854, and 868–948; these read RRQR…RQPN, GPGGPDQQWPTVSSATPEPEAGEVSP, and KYGP…NSDQ. Positions 783–795 are enriched in basic and acidic residues; it reads AEEKQLSESEYVG. PXXP repeat units follow at residues 797-800, 830-833, 871-874, and 889-892; these read PRQP, PGGP, PGNP, and PGSP. Residues 907–921 show a composition bias toward basic and acidic residues; sequence DKSDFITFGKKEETK.

Its subcellular location is the cell membrane. In terms of biological role, potential calcium-dependent cell-adhesion protein. May be involved in the establishment and maintenance of specific neuronal connections in the brain. This Homo sapiens (Human) protein is Protocadherin alpha-2 (PCDHA2).